We begin with the raw amino-acid sequence, 64 residues long: Conotoxin Leo-T1 (64 aa).

Residues 1–22 form the signal peptide; that stretch reads MRCLPVFIILLLLIPSAPSVDA. Positions 23–48 are excised as a propeptide; that stretch reads QPKTEDDVPLASLHDNAKLTLQGLWD.

Belongs to the conotoxin T superfamily. In terms of processing, contains 2 disulfide bonds that can be either 'C1-C3, C2-C4' or 'C1-C4, C2-C3', since these disulfide connectivities have been observed for conotoxins with cysteine framework V (for examples, see AC P0DQQ7 and AC P81755). Expressed by the venom duct.

It is found in the secreted. The sequence is that of Conotoxin Leo-T1 from Conus leopardus (Leopard cone).